We begin with the raw amino-acid sequence, 134 residues long: MSWQGYVDDHLMCDIEGHEGHRLTAAAIVGHDGSVWAQSATFPQFKPEEMNGIMTDFNEPGHLAPTGLHLGGTKYMVIQGEAGAVIRGKKGSGGITIKKTGQALVFGIYEEPVTPGQCNMVVERLGDYLLEQGL.

A disulfide bridge links C13 with C118. The Involved in PIP2 interaction signature appears at 84 to 100; it reads AVIRGKKGSGGITIKKT. T114 bears the Phosphothreonine mark.

This sequence belongs to the profilin family. In terms of assembly, occurs in many kinds of cells as a complex with monomeric actin in a 1:1 ratio. In terms of processing, phosphorylated by MAP kinases.

It is found in the cytoplasm. It localises to the cytoskeleton. Its function is as follows. Binds to actin and affects the structure of the cytoskeleton. At high concentrations, profilin prevents the polymerization of actin, whereas it enhances it at low concentrations. The sequence is that of Profilin-3 from Olea europaea (Common olive).